Consider the following 115-residue polypeptide: NADH-ubiquinone oxidoreductase chain 3 (115 aa).

A run of 3 helical transmembrane segments spans residues 4–24 (LLVIAVNTILSLILITVAFWL), 55–75 (FFLVAITFLLFDLEIALLLPI), and 84–104 (INMVLPTALILLTILALGLAY).

It belongs to the complex I subunit 3 family. As to quaternary structure, core subunit of respiratory chain NADH dehydrogenase (Complex I) which is composed of 45 different subunits. Interacts with TMEM186. Interacts with TMEM242.

Its subcellular location is the mitochondrion inner membrane. The catalysed reaction is a ubiquinone + NADH + 5 H(+)(in) = a ubiquinol + NAD(+) + 4 H(+)(out). In terms of biological role, core subunit of the mitochondrial membrane respiratory chain NADH dehydrogenase (Complex I) which catalyzes electron transfer from NADH through the respiratory chain, using ubiquinone as an electron acceptor. Essential for the catalytic activity of complex I. The polypeptide is NADH-ubiquinone oxidoreductase chain 3 (Ochrotomys nuttalli (Golden mouse)).